The following is a 298-amino-acid chain: Protease HtpX homolog (298 aa).

2 helical membrane-spanning segments follow: residues 14-34 and 39-59; these read VVLLVVFFALLALIGASAGYL and YAMGLVLALVIGVIYATSMIF. H143 serves as a coordination point for Zn(2+). The active site involves E144. Zn(2+) is bound at residue H147. Helical transmembrane passes span 158 to 178 and 197 to 217; these read IAVALASAVTVISSIGGRMLW and IITLLLSLLSLLLAPLVASLI. E226 serves as a coordination point for Zn(2+).

It belongs to the peptidase M48B family. It depends on Zn(2+) as a cofactor.

It is found in the cell membrane. This chain is Protease HtpX homolog, found in Streptococcus pyogenes serotype M6 (strain ATCC BAA-946 / MGAS10394).